Here is a 1077-residue protein sequence, read N- to C-terminus: Teashirt homolog 1-B (1077 aa).

Disordered regions lie at residues 1-110 (MPRR…NASY) and 142-179 (NEKASPTTNTDKSSKSEASGPTSDPGTPTTITSSSCTN). The segment covering 26-36 (TEEDNLEDDGL) has biased composition (acidic residues). Over residues 56-69 (TQSYQNSPISSATN) the composition is skewed to polar residues. The segment covering 160 to 179 (SGPTSDPGTPTTITSSSCTN) has biased composition (low complexity). Residues 248-272 (FRCKDCSAAYDTLVELTVHMNETGH) form a C2H2-type 1 zinc finger. Residues 274–286 (RDDNRDREAERTK) show a composition bias toward basic and acidic residues. Positions 274-300 (RDDNRDREAERTKRWSKPRKRSLMEME) are disordered. Residues 309-333 (LKCMYCGHSFESLQDLSVHMIKTKH) form a C2H2-type 2 zinc finger. Residues 362–394 (ALPDSPEQAGISPGASVSESAKDPKAANPYVTP) are disordered. Residues 418–442 (LKCMECGSSHDTLQQLTAHMMVTGH) form a C2H2-type 3 zinc finger. Disordered regions lie at residues 473–530 (PPTT…KIEP) and 849–873 (GRLTPKSSTPSTVSEKSDADGSSFE). A compositionally biased stretch (basic and acidic residues) spans 497–529 (HSEEKKDPEKEKVNIGEVEKKIKEENEDPEKIE). Residues 853-862 (PKSSTPSTVS) are compositionally biased toward polar residues. The homeobox DNA-binding region spans 885 to 955 (RKGRQSNWNP…NVKYQLRRTG (71 aa)). 2 C2H2-type zinc fingers span residues 970–992 (FFCNDCASQFRTASTYIGHLETH) and 1037–1060 (FQCKLCNRTFASKHAVKLHLSKTH).

The protein belongs to the teashirt C2H2-type zinc-finger protein family.

It localises to the nucleus. In terms of biological role, probable transcriptional regulator involved in developmental processes. May act as a transcriptional repressor (Potential). Involved in two major neuronal regionalization processes: primary anteroposterior (AP) axis patterning of the CNS and segmentation of the cranial neuronal crest (CNS) development. This chain is Teashirt homolog 1-B (tshz1-b), found in Xenopus laevis (African clawed frog).